We begin with the raw amino-acid sequence, 229 residues long: MSENSTPNNPVVPGAGADGPSLSDSASISGSDAVNLAAEQSKSTAHRNIPGLGDLPIPDDTANLREGPNLHDGLLALLPLVGVWRGEGQADTAEDGQYAFGQQITFAHDGENYLSFESRMWKLDEEGNPTGVDQRESGFWRINLKDEIEFVCTHAGGVVEIYYGQPLNERAWQLESASTMVTATGPSTLGPGKRLYGLLPTNELGWVDERLVGDALKPRMSAQLTRVIG.

The segment at 1–54 is disordered; that stretch reads MSENSTPNNPVVPGAGADGPSLSDSASISGSDAVNLAAEQSKSTAHRNIPGLGD. Residues 18-33 are compositionally biased toward low complexity; the sequence is DGPSLSDSASISGSDA. Residues 82–88 carry the GXWXGXG motif; it reads GVWRGEG.

It belongs to the nitrobindin family.

This Corynebacterium glutamicum (strain R) protein is Ferric nitrobindin-like protein.